Reading from the N-terminus, the 67-residue chain is Small ribosomal subunit protein eS17 (67 aa).

This sequence belongs to the eukaryotic ribosomal protein eS17 family.

In Haloquadratum walsbyi (strain DSM 16790 / HBSQ001), this protein is Small ribosomal subunit protein eS17.